The primary structure comprises 164 residues: V-type proton ATPase subunit c3 (164 aa).

Residues 1 to 11 (MSTFSGDETAP) lie on the Lumenal side of the membrane. Residues 12 to 32 (FFGFLGAAAALVFSCMGAAYG) form a helical membrane-spanning segment. At 33–54 (TAKSGVGVASMGVMRPELVMKS) the chain is on the cytoplasmic side. The chain crosses the membrane as a helical span at residues 55–75 (IVPVVMAGVLGIYGLIIAVII). Topologically, residues 76 to 94 (STGINPKAKSYYLFDGYAH) are lumenal. Residues 95–116 (LSSGLACGLAGLSAGMAIGIVG) form a helical membrane-spanning segment. Residues 117 to 128 (DAGVRANAQQPK) are Cytoplasmic-facing. Residues 129–154 (LFVGMILILIFAEALALYGLIVGIIL) traverse the membrane as a helical segment. Residues 155 to 164 (SSRAGQSRAE) are Lumenal-facing.

Belongs to the V-ATPase proteolipid subunit family. As to quaternary structure, V-ATPase is a heteromultimeric enzyme composed of a peripheral catalytic V1 complex (components A to H) attached to an integral membrane V0 proton pore complex (components: a, c, c'', d and e). The proteolipid components c and c'' are present as a hexameric ring that forms the proton-conducting pore. In terms of tissue distribution, expressed in leaf, root, flower and silique.

It localises to the vacuole membrane. Its function is as follows. Proton-conducting pore forming subunit of the membrane integral V0 complex of vacuolar ATPase. V-ATPase is responsible for acidifying a variety of intracellular compartments in eukaryotic cells. The protein is V-type proton ATPase subunit c3 (VHA-c3) of Arabidopsis thaliana (Mouse-ear cress).